Reading from the N-terminus, the 75-residue chain is Small capsomere-interacting protein (75 aa).

It belongs to the herpesviridae small capsomere-interacting protein family. Interacts with the major capsid protein/MCP.

Its subcellular location is the virion. It is found in the host nucleus. In terms of biological role, participates in the assembly of the infectious particles by decorating the outer surface of the capsid shell and thus forming a layer between the capsid and the tegument. Complexes composed of the capsid protein VP5 and UL48A assemble together in the host cytoplasm and are translocated to the nucleus, where they accumulate and participate in capsid assembly. Its function is as follows. Participates in the assembly of the infectious particles by decorating the outer surface of the capsid shell and thus forming a layer between the capsid and the tegument. Complexes composed of the major capsid protein and small capsomere-interacting protein/SCP assemble together in the host cytoplasm and are translocated to the nucleus, where they accumulate and participate in capsid assembly. This Homo sapiens (Human) protein is Small capsomere-interacting protein.